Consider the following 271-residue polypeptide: Protein FAM110D (271 aa).

A compositionally biased stretch (polar residues) spans 1-13 (MLLSSPTTPSRGR). Disordered regions lie at residues 1–84 (MLLS…PDSL), 118–149 (DAAPSSPAPTERPGAPAGWAGSPDTPEATGKR), and 186–242 (PQSW…GRPT).

The protein belongs to the FAM110 family.

The sequence is that of Protein FAM110D from Mus musculus (Mouse).